The following is a 475-amino-acid chain: Equilibrative nucleoside transporter 3 (475 aa).

Residues 1–51 (MAFASEDIAYHSSNAVYRVPSNRHEADQEALLGKPLDYPAPGLQRPEDRFN) are Cytoplasmic-facing. Residue S21 is modified to Phosphoserine. The Dileucine internalization motif signature appears at 31–32 (LL). A helical transmembrane segment spans residues 52–72 (GAYIIFFCLGIGGLLPWNFFV). Over 73-105 (TAKEYWAFKLRNCSSPASGKDPEDADILNYFES) the chain is Extracellular. N-linked (GlcNAc...) asparagine glycosylation occurs at N84. The chain crosses the membrane as a helical span at residues 106 to 126 (YLAVASTVPSLLFLVANFLLV). Residues 127 to 132 (NRIRVH) lie on the Cytoplasmic side of the membrane. Residues 133–153 (VRVLASLSVSLAIFVVMAVLV) traverse the membrane as a helical segment. The Extracellular portion of the chain corresponds to 154-162 (RVDTSSWTR). A helical transmembrane segment spans residues 163 to 183 (GFFSIAMACMAIISSSSTIFN). The Cytoplasmic portion of the chain corresponds to 184–199 (SSVYGLTGSFPMRNAQ). Residues 200–220 (ALISGGAMGGTVSAVASLVDL) traverse the membrane as a helical segment. The Extracellular portion of the chain corresponds to 221 to 230 (AASSDVRDSA). The helical transmembrane segment at 231 to 251 (LAFFLTAAVFLGLCVGLYLLL) threads the bilayer. The Cytoplasmic segment spans residues 252–305 (PQLEYARYYMRPVVPIHVFSSEDSPPRDAPSTSSVAPASRAVHTPPLGPILKKT). Residues 272-291 (SEDSPPRDAPSTSSVAPASR) are disordered. The helical transmembrane segment at 306–326 (AGLGFCAVFLYFITALIFPAI) threads the bilayer. Over 327–340 (STNIQPMHKGTGSP) the chain is Extracellular. The helical transmembrane segment at 341–361 (WTSKFYVPLTVFLLFNFADLC) threads the bilayer. The Cytoplasmic segment spans residues 362–377 (GRQVTAWIQVPGPRSK). Residues 378 to 398 (LLPILAVSRVCLVPLFLLCNY) form a helical membrane-spanning segment. Over 399 to 414 (QPRSHLTLVLFQSDIY) the chain is Extracellular. Residues 415-437 (PILFTCLLGLSNGYLSTLVLMYG) traverse the membrane as a helical segment. Residues 438 to 450 (PKIVPRELAEATS) lie on the Cytoplasmic side of the membrane. Residues 451-471 (VVMLFYMSLGLMLGSACAALL) form a helical membrane-spanning segment. The Extracellular segment spans residues 472–475 (EHFI).

The protein belongs to the SLC29A/ENT transporter (TC 2.A.57) family. In terms of tissue distribution, widely expressed. Highest levels in heart and liver (at protein level).

It is found in the lysosome membrane. It localises to the late endosome membrane. The protein localises to the mitochondrion membrane. Its subcellular location is the cell membrane. The enzyme catalyses adenosine(in) = adenosine(out). It carries out the reaction guanosine(in) = guanosine(out). It catalyses the reaction inosine(in) = inosine(out). The catalysed reaction is uridine(out) = uridine(in). The enzyme catalyses cytidine(in) = cytidine(out). It carries out the reaction thymidine(in) = thymidine(out). It catalyses the reaction 2'-deoxyadenosine(in) = 2'-deoxyadenosine(out). The catalysed reaction is 2'-deoxycytidine(in) = 2'-deoxycytidine(out). The enzyme catalyses guanine(out) = guanine(in). It carries out the reaction uracil(in) = uracil(out). It catalyses the reaction (R)-noradrenaline(out) = (R)-noradrenaline(in). The catalysed reaction is dopamine(out) = dopamine(in). The enzyme catalyses serotonin(out) = serotonin(in). It carries out the reaction tyramine(in) = tyramine(out). It catalyses the reaction ATP(in) = ATP(out). Functionally, uniporter that mediates the facilitative transport of nucleoside across lysosomal and mitochondrial membranes. Functions as a non-electrogenic Na(+)-independent transporter. Substrate transport is pH-dependent and enhanced under acidic condition, probably reflecting the location of the transporter in acidic intracellular compartments. Proton is not a cotransporting ion but most likely change the ionization state of the transporter which dictates transport-permissible/impermissible conformation for nucleoside translocation. May direct the nucleoside transport from lysosomes to cytosol or cytosol to mitochondria to facilitate the fundamental function of salvage synthesis of nucleic acids. Involved in the transport of nucleosides (adenosine, guanosine, uridine, thymidine, cytidine and inosine) and deoxynucleosides (deoxyadenosine, deoxycytidine). Also mediates transport of purine nucleobases (adenine, guanine) and pyrimidine nucleobases (uracil). Also able to transport monoamine neurotransmitters dopamine, serotonin, noradrenaline and tyramine. Capable of transporting ATP. Mediates nucleoside export from lysosomes in macrophages, which regulates macrophage functions and numbers. This Rattus norvegicus (Rat) protein is Equilibrative nucleoside transporter 3.